The chain runs to 211 residues: Ubiquitin-conjugating enzyme E2 S (211 aa).

The UBC core domain maps to 11-157 (HIIRQVYKEV…ARLMTEIHAQ (147 aa)). Cysteine 95 (glycyl thioester intermediate) is an active-site residue. Residues 157–211 (QGSSLRGKDPTDPCSSASATLVSGDGPMAKKHAGDRDKKLAAKKKTDKKRALRRL) are disordered. Basic residues predominate over residues 197–211 (AAKKKTDKKRALRRL).

This sequence belongs to the ubiquitin-conjugating enzyme family.

It carries out the reaction S-ubiquitinyl-[E1 ubiquitin-activating enzyme]-L-cysteine + [E2 ubiquitin-conjugating enzyme]-L-cysteine = [E1 ubiquitin-activating enzyme]-L-cysteine + S-ubiquitinyl-[E2 ubiquitin-conjugating enzyme]-L-cysteine.. It participates in protein modification; protein ubiquitination. In terms of biological role, catalyzes the covalent attachment of ubiquitin to other proteins. Acts as an essential factor of the anaphase promoting complex/cyclosome (APC/C), a cell cycle-regulated ubiquitin ligase that controls progression through mitosis. Acts by specifically elongating 'Lys-11'-linked polyubiquitin chains initiated by the E2 enzyme ube2c/ubch10 on APC/C substrates, enhancing the degradation of APC/C substrates by the proteasome and promoting mitotic exit. This Xenopus tropicalis (Western clawed frog) protein is Ubiquitin-conjugating enzyme E2 S (ube2s).